Here is a 970-residue protein sequence, read N- to C-terminus: Villin-3 (970 aa).

Gelsolin-like repeat units follow at residues Ala31–Leu111, Thr151–Lys219, Val273–Phe339, Lys416–Phe484, Ala536–Ala576, and Asn643–Phe714. The segment at Asp741–Leu908 is disordered. Positions Thr755–Phe778 are enriched in polar residues. Residues Ala833–Ser842 are compositionally biased toward low complexity. Residues Lys878–Ile893 show a composition bias toward polar residues. The HP domain maps to Glu905–Phe970.

This sequence belongs to the villin/gelsolin family. Expressed in roots, young leaves, and inflorescences, mostly in the vasculature of roots, leaves, and filaments of the anthers and in epidermal cells of the elongation zone and root hairs. Also detected in guard cells.

Its subcellular location is the cytoplasm. The protein resides in the cytoskeleton. Ca(2+)-regulated actin-binding protein. Binds actin microfilaments (MFs). Involved in actin filament bundling, severing and capping. Caps the barbed end of actin filaments and is able to sever them in a calcium-dependent manner. MF severing is promoted by VLN1. This chain is Villin-3, found in Oryza sativa subsp. japonica (Rice).